The following is a 161-amino-acid chain: 6,7-dimethyl-8-ribityllumazine synthase (161 aa).

5-amino-6-(D-ribitylamino)uracil is bound by residues Trp31, 65 to 67 (TFE), and 89 to 91 (CVV). A (2S)-2-hydroxy-3-oxobutyl phosphate-binding site is contributed by 94-95 (DT). Residue His97 is the Proton donor of the active site. 5-amino-6-(D-ribitylamino)uracil is bound at residue Phe122. Arg136 contacts (2S)-2-hydroxy-3-oxobutyl phosphate.

It belongs to the DMRL synthase family.

It carries out the reaction (2S)-2-hydroxy-3-oxobutyl phosphate + 5-amino-6-(D-ribitylamino)uracil = 6,7-dimethyl-8-(1-D-ribityl)lumazine + phosphate + 2 H2O + H(+). It participates in cofactor biosynthesis; riboflavin biosynthesis; riboflavin from 2-hydroxy-3-oxobutyl phosphate and 5-amino-6-(D-ribitylamino)uracil: step 1/2. Functionally, catalyzes the formation of 6,7-dimethyl-8-ribityllumazine by condensation of 5-amino-6-(D-ribitylamino)uracil with 3,4-dihydroxy-2-butanone 4-phosphate. This is the penultimate step in the biosynthesis of riboflavin. The protein is 6,7-dimethyl-8-ribityllumazine synthase of Porphyromonas gingivalis (strain ATCC 33277 / DSM 20709 / CIP 103683 / JCM 12257 / NCTC 11834 / 2561).